A 158-amino-acid chain; its full sequence is EOLA-like protein (158 aa).

In terms of domain architecture, ASCH spans 6 to 92 (LSFRQPYAGF…IAGLVDIGET (87 aa)).

The protein belongs to the EOLA family.

The sequence is that of EOLA-like protein from Pongo abelii (Sumatran orangutan).